A 156-amino-acid chain; its full sequence is Cyclic pyranopterin monophosphate synthase (156 aa).

Substrate contacts are provided by residues 73–75 and 110–111; these read LCH and ME. Aspartate 125 is a catalytic residue.

Belongs to the MoaC family. Homohexamer; trimer of dimers.

The enzyme catalyses (8S)-3',8-cyclo-7,8-dihydroguanosine 5'-triphosphate = cyclic pyranopterin phosphate + diphosphate. It participates in cofactor biosynthesis; molybdopterin biosynthesis. Its function is as follows. Catalyzes the conversion of (8S)-3',8-cyclo-7,8-dihydroguanosine 5'-triphosphate to cyclic pyranopterin monophosphate (cPMP). The polypeptide is Cyclic pyranopterin monophosphate synthase (Pseudomonas putida (strain GB-1)).